Reading from the N-terminus, the 175-residue chain is MALTLEQKQKVVAEVSEVAANAYSAVAADYHGLEVAQLTKLRNQAREKGVVLKVVKNTLAKRAFEGTSFECMSDKMVGPLLLAFSTEDLGSAARVIHEFAKEHKALEPKLVSVGGELFGPEEIERVAKLPTRDEALSILMATMKAPVTKLARTMKEVPGKFVRTVAAVKDAKEAA.

This sequence belongs to the universal ribosomal protein uL10 family. As to quaternary structure, part of the ribosomal stalk of the 50S ribosomal subunit. The N-terminus interacts with L11 and the large rRNA to form the base of the stalk. The C-terminus forms an elongated spine to which L12 dimers bind in a sequential fashion forming a multimeric L10(L12)X complex.

Functionally, forms part of the ribosomal stalk, playing a central role in the interaction of the ribosome with GTP-bound translation factors. In Psychrobacter sp. (strain PRwf-1), this protein is Large ribosomal subunit protein uL10.